The sequence spans 186 residues: Ribosome-recycling factor (186 aa).

The protein belongs to the RRF family.

The protein resides in the cytoplasm. In terms of biological role, responsible for the release of ribosomes from messenger RNA at the termination of protein biosynthesis. May increase the efficiency of translation by recycling ribosomes from one round of translation to another. This chain is Ribosome-recycling factor, found in Bordetella petrii (strain ATCC BAA-461 / DSM 12804 / CCUG 43448).